A 116-amino-acid chain; its full sequence is Putative membrane protein insertion efficiency factor (116 aa).

It belongs to the UPF0161 family.

It is found in the cell inner membrane. Could be involved in insertion of integral membrane proteins into the membrane. This Bartonella tribocorum (strain CIP 105476 / IBS 506) protein is Putative membrane protein insertion efficiency factor.